We begin with the raw amino-acid sequence, 284 residues long: MRLIIVSGRSGSGKSTALDVLEDSGFYCIDNLPAGVLPQLAENALINTELLQPKVAVSIDARNLPSHLMRFPELLEEARARHIQCDVLYLDADEEVLLKRFSETRRRHPLTNANRSLAEAIRVESDLLGPIADLADLKIDTTNLNLYQLRDSIKLRLLNQPEPGTAFLVESFGFKRGMPVDADLVFDVRCLPNPYWKPELREHSGLDQPVIDYLAAQPDVEDMYNDISSYLLKWLPRFAASNRAYVTIAIGCTGGHHRSVYITERLGRQLQQTLKNVQVRHRDL.

8 to 15 serves as a coordination point for ATP; it reads GRSGSGKS. Residue 60 to 63 coordinates GTP; sequence DARN.

The protein belongs to the RapZ-like family.

Functionally, displays ATPase and GTPase activities. The polypeptide is Nucleotide-binding protein in ptsO 5'region (Pseudomonas putida (Arthrobacter siderocapsulatus)).